Consider the following 261-residue polypeptide: Undecaprenyl-diphosphatase (261 aa).

Helical transmembrane passes span 9–31 (ALLL…GHLT), 46–66 (FLKT…LLLY), 80–100 (IAVA…LIKG), 102–122 (ILGN…VLLF), 137–157 (ALPL…ALFP), 180–200 (AEFS…YDLW), 209–229 (GGWS…LVTV), and 240–260 (GFRP…FFFL).

It belongs to the UppP family.

The protein resides in the cell inner membrane. The catalysed reaction is di-trans,octa-cis-undecaprenyl diphosphate + H2O = di-trans,octa-cis-undecaprenyl phosphate + phosphate + H(+). Functionally, catalyzes the dephosphorylation of undecaprenyl diphosphate (UPP). Confers resistance to bacitracin. In Thermus thermophilus (strain ATCC 27634 / DSM 579 / HB8), this protein is Undecaprenyl-diphosphatase.